The chain runs to 698 residues: Potassium-transporting ATPase ATP-binding subunit (698 aa).

A run of 4 helical transmembrane segments spans residues Ile-56 to Leu-76, Leu-82 to Ala-102, Thr-240 to Thr-260, and Ile-271 to Ile-291. Asp-324 serves as the catalytic 4-aspartylphosphate intermediate. ATP is bound by residues Asp-361, Glu-365, Phe-393–Ser-400, and Lys-412. Mg(2+)-binding residues include Asp-535 and Asp-539. 3 helical membrane passes run Phe-605–Met-625, Ala-633–Met-653, and Gly-677–Ile-697.

This sequence belongs to the cation transport ATPase (P-type) (TC 3.A.3) family. Type IA subfamily. As to quaternary structure, the system is composed of three essential subunits: KdpA, KdpB and KdpC.

It localises to the cell membrane. The catalysed reaction is K(+)(out) + ATP + H2O = K(+)(in) + ADP + phosphate + H(+). In terms of biological role, part of the high-affinity ATP-driven potassium transport (or Kdp) system, which catalyzes the hydrolysis of ATP coupled with the electrogenic transport of potassium into the cytoplasm. This subunit is responsible for energy coupling to the transport system and for the release of the potassium ions to the cytoplasm. The polypeptide is Potassium-transporting ATPase ATP-binding subunit (Bacillus cytotoxicus (strain DSM 22905 / CIP 110041 / 391-98 / NVH 391-98)).